The chain runs to 193 residues: Thioredoxin peroxidase (193 aa).

In terms of domain architecture, Thioredoxin spans 3–161; the sequence is AVVGKLAPSF…ALRLLDAFQF (159 aa). The Cysteine sulfenic acid (-SOH) intermediate role is filled by C48.

This sequence belongs to the peroxiredoxin family. AhpC/Prx1 subfamily. Homodimer; disulfide-linked, upon oxidation.

The catalysed reaction is a hydroperoxide + [thioredoxin]-dithiol = an alcohol + [thioredoxin]-disulfide + H2O. Thiol-specific peroxidase that catalyzes the reduction of hydrogen peroxide and organic hydroperoxides to water and alcohols, respectively. Plays a role in cell protection against oxidative stress by detoxifying peroxides and as sensor of hydrogen peroxide-mediated signaling events. This chain is Thioredoxin peroxidase (TPX), found in Echinococcus granulosus (Hydatid tapeworm).